Consider the following 367-residue polypeptide: MSLADQVLAVNDDLPIRTDKPVHSGKVRSVYWLTPEDSARLIKEKGYDVPADAPLALMVISDRISAFDCIWQGVDGLNGVPGKGAALNAISSHWFKLFKEKGLADSHILDIPHPFVWIVQKARPVMIEAIARQYITGSMWRAYKDGEREFCGITLPEGLKKDQKLPEILITPSTKGVLTGLDGVPEADDVNVSRADIERHYQGFNFSKPADIDRYEVLLKEGFNVISDALASLDQIFVDTKFEFGYVQDAAGNEKLIYMDEVGTPDSSRIWDGAALRDGQIVEKSKEGFRQWLLNHFPDPDILLNKNRMPERFALAKGNKLPTEVMMDISNTYVGIAEKIIGHPLVRSANPKQEIIEVLRDQYGLID.

It belongs to the SAICAR synthetase family.

The enzyme catalyses 5-amino-1-(5-phospho-D-ribosyl)imidazole-4-carboxylate + L-aspartate + ATP = (2S)-2-[5-amino-1-(5-phospho-beta-D-ribosyl)imidazole-4-carboxamido]succinate + ADP + phosphate + 2 H(+). The protein operates within purine metabolism; IMP biosynthesis via de novo pathway; 5-amino-1-(5-phospho-D-ribosyl)imidazole-4-carboxamide from 5-amino-1-(5-phospho-D-ribosyl)imidazole-4-carboxylate: step 1/2. The chain is Phosphoribosylaminoimidazole-succinocarboxamide synthase from Aeromonas salmonicida (strain A449).